A 277-amino-acid polypeptide reads, in one-letter code: NH(3)-dependent NAD(+) synthetase (277 aa).

36 to 43 (GLSGGIDS) lines the ATP pocket. D42 provides a ligand contact to Mg(2+). Deamido-NAD(+) is bound at residue R118. T138 contributes to the ATP binding site. A Mg(2+)-binding site is contributed by E143. K167 and S189 together coordinate ATP.

This sequence belongs to the NAD synthetase family. Homodimer.

The enzyme catalyses deamido-NAD(+) + NH4(+) + ATP = AMP + diphosphate + NAD(+) + H(+). It participates in cofactor biosynthesis; NAD(+) biosynthesis; NAD(+) from deamido-NAD(+) (ammonia route): step 1/1. In terms of biological role, catalyzes the ATP-dependent amidation of deamido-NAD to form NAD. Uses ammonia as a nitrogen source. The protein is NH(3)-dependent NAD(+) synthetase of Chlorobium phaeobacteroides (strain BS1).